The primary structure comprises 160 residues: Cytochrome b6-f complex subunit 4 (160 aa).

The next 3 membrane-spanning stretches (helical) occupy residues Leu36–Val56, Leu95–Glu115, and Ala131–Ile151.

Belongs to the cytochrome b family. PetD subfamily. The 4 large subunits of the cytochrome b6-f complex are cytochrome b6, subunit IV (17 kDa polypeptide, petD), cytochrome f and the Rieske protein, while the 4 small subunits are petG, petL, petM and petN. The complex functions as a dimer.

Its subcellular location is the plastid. The protein localises to the chloroplast thylakoid membrane. In terms of biological role, component of the cytochrome b6-f complex, which mediates electron transfer between photosystem II (PSII) and photosystem I (PSI), cyclic electron flow around PSI, and state transitions. The polypeptide is Cytochrome b6-f complex subunit 4 (Bigelowiella natans (Pedinomonas minutissima)).